The primary structure comprises 134 residues: NADPH-dependent 7-cyano-7-deazaguanine reductase (134 aa).

Cys48 acts as the Thioimide intermediate in catalysis. The active-site Proton donor is the Asp55. Residues 70–72 (VEL) and 89–90 (QE) each bind substrate.

The protein belongs to the GTP cyclohydrolase I family. QueF type 1 subfamily.

It is found in the cytoplasm. It carries out the reaction 7-aminomethyl-7-carbaguanine + 2 NADP(+) = 7-cyano-7-deazaguanine + 2 NADPH + 3 H(+). The protein operates within tRNA modification; tRNA-queuosine biosynthesis. Functionally, catalyzes the NADPH-dependent reduction of 7-cyano-7-deazaguanine (preQ0) to 7-aminomethyl-7-deazaguanine (preQ1). This chain is NADPH-dependent 7-cyano-7-deazaguanine reductase, found in Caldanaerobacter subterraneus subsp. tengcongensis (strain DSM 15242 / JCM 11007 / NBRC 100824 / MB4) (Thermoanaerobacter tengcongensis).